A 587-amino-acid polypeptide reads, in one-letter code: Lamin-B1 (587 aa).

Residues 1–11 are compositionally biased toward polar residues; it reads MATATPVQQRA. Positions 1–29 are disordered; it reads MATATPVQQRAGSRASAPATPFSPTRLSR. Ala2 is subject to N-acetylalanine. The head stretch occupies residues 2-34; the sequence is ATATPVQQRAGSRASAPATPFSPTRLSRLQEKE. Phosphothreonine occurs at positions 3 and 5. Arg14 carries the omega-N-methylarginine modification. A Phosphoserine modification is found at Ser16. Thr20 carries the phosphothreonine modification. Position 23 is a phosphoserine (Ser23). At Thr25 the chain carries Phosphothreonine. The residue at position 28 (Ser28) is a Phosphoserine. The region spanning 32 to 388 is the IF rod domain; the sequence is EKEELRELND…KLLEGEEERL (357 aa). A coil 1A region spans residues 35–69; it reads ELRELNDRLAVYIDKVRSLETENSALQLQVTEREE. The interval 70–81 is linker 1; sequence VRGRELTGLKAL. A coil 1B region spans residues 82–215; sequence YETELADARR…EFRKNMYEEE (134 aa). A Glycyl lysine isopeptide (Lys-Gly) (interchain with G-Cter in SUMO2) cross-link involves residue Lys102. At Lys111 the chain carries N6-acetyllysine. A Glycyl lysine isopeptide (Lys-Gly) (interchain with G-Cter in SUMO2) cross-link involves residue Lys123. A Phosphoserine modification is found at Ser126. A Glycyl lysine isopeptide (Lys-Gly) (interchain with G-Cter in SUMO2) cross-link involves residue Lys145. Lys157 carries the N6-acetyllysine; alternate modification. Lys157 participates in a covalent cross-link: Glycyl lysine isopeptide (Lys-Gly) (interchain with G-Cter in SUMO2); alternate. Residue Ser158 is modified to Phosphoserine. Lys181 participates in a covalent cross-link: Glycyl lysine isopeptide (Lys-Gly) (interchain with G-Cter in SUMO2). Phosphoserine occurs at positions 200 and 232. Positions 216-243 are linker 2; that stretch reads INETRRKHETRLVEVDSGRQIEYEYKLA. Glycyl lysine isopeptide (Lys-Gly) (interchain with G-Cter in SUMO2) cross-links involve residues Lys241 and Lys261. Positions 244 to 386 are coil 2; it reads QALHEMREQH…YRKLLEGEEE (143 aa). The residue at position 271 (Lys271) is an N6-acetyllysine; alternate. Lys271 is covalently cross-linked (Glycyl lysine isopeptide (Lys-Gly) (interchain with G-Cter in SUMO2); alternate). 2 positions are modified to phosphoserine: Ser278 and Ser302. A Glycyl lysine isopeptide (Lys-Gly) (interchain with G-Cter in SUMO2) cross-link involves residue Lys312. Lys330 is modified (N6-acetyllysine; alternate). Residue Lys330 forms a Glycyl lysine isopeptide (Lys-Gly) (interchain with G-Cter in SUMO2); alternate linkage. 2 positions are modified to phosphoserine: Ser375 and Ser393. Positions 387–587 are tail; that stretch reads RLKLSPSPSS…RASNKSCAIM (201 aa). Residues 390-409 are compositionally biased toward low complexity; sequence LSPSPSSRVTVSRASSSRSV. The segment at 390–432 is disordered; sequence LSPSPSSRVTVSRASSSRSVRTTRGKRKRVDVEESEASSSVSI. The O-linked (GlcNAc) threonine glycan is linked to Thr399. Arg413 bears the Omega-N-methylarginine mark. The Nuclear localization signal motif lies at 415–420; it reads KRKRVD. Residues 430 to 546 enclose the LTD domain; the sequence is VSISHSASAT…EEVAQRSTVF (117 aa). Lys483 carries the post-translational modification N6-acetyllysine. Lys532 is covalently cross-linked (Glycyl lysine isopeptide (Lys-Gly) (interchain with G-Cter in SUMO2)). Ser534 is modified (phosphoserine). Residue Lys547 forms a Glycyl lysine isopeptide (Lys-Gly) (interchain with G-Cter in SUMO2) linkage. The interval 550–587 is disordered; it reads IPEEEEEEEEEPIGVPLEEERFHQQGTPRASNKSCAIM. Positions 551-561 are enriched in acidic residues; it reads PEEEEEEEEEP. A compositionally biased stretch (polar residues) spans 573-587; sequence QQGTPRASNKSCAIM. Position 576 is a phosphothreonine (Thr576). Cys584 is modified (cysteine methyl ester). Cys584 carries S-farnesyl cysteine lipidation. The propeptide at 585–587 is removed in mature form; it reads AIM.

This sequence belongs to the intermediate filament family. As to quaternary structure, homodimer. Lamin dimers then assemble into dimeric head-to-tail polymers. Ultimately, two head-to-tail polymers assemble laterally into a protofilament with a uniformly shaped rod of 3.5 nm in diameter. Interacts with SPAG4 and SEPT12. Post-translationally, B-type lamins undergo a series of modifications, such as farnesylation and phosphorylation. Increased phosphorylation of the lamins occurs before envelope disintegration and probably plays a role in regulating lamin associations. In terms of processing, phosphorylation plays a key role in lamin organization, subcellular localization and nuclear envelope disintegration. Phosphorylation by CDK1 at Ser-23 and Ser-393 at the onset of mitosis drives lamin disassembly and nuclear envelope breakdown.

The protein resides in the nucleus lamina. Its function is as follows. Lamins are intermediate filament proteins that assemble into a filamentous meshwork, and which constitute the major components of the nuclear lamina, a fibrous layer on the nucleoplasmic side of the inner nuclear membrane. Lamins provide a framework for the nuclear envelope, bridging the nuclear envelope and chromatin, thereby playing an important role in nuclear assembly, chromatin organization, nuclear membrane and telomere dynamics. The structural integrity of the lamina is strictly controlled by the cell cycle, as seen by the disintegration and formation of the nuclear envelope in prophase and telophase, respectively. In Rattus norvegicus (Rat), this protein is Lamin-B1 (Lmnb1).